Here is a 265-residue protein sequence, read N- to C-terminus: MLLRPLRGWAALALRCFEPGSPGSPASGPGSRRVQRGAWPSDKEREKEKKSVICVEGNIASGKTTCLEFFSNATDIEVLTEPVSKWRNVRGHNPLGLMYQDASRWGLTLQTYVQLTMLDRHTCPQVSSVRLMERSIHSARYIFVENLYRSGKMPEVDYVVLSEWFDWILRNMDVSIDLIVYLRTNPETCYQRLKRRCREEEKVIPLEYLEAIHHLHEEWLIKGSLFPVAAPVLVIEADHHMERMLQLFEQNRDRILTPENRKLGP.

A mitochondrion-targeting transit peptide spans 1-33 (MLLRPLRGWAALALRCFEPGSPGSPASGPGSRR). The span at 21–31 (SPGSPASGPGS) shows a compositional bias: low complexity. The disordered stretch occupies residues 21-45 (SPGSPASGPGSRRVQRGAWPSDKER). 57-65 (GNIASGKTT) is a binding site for ATP. E133 acts as the Proton acceptor in catalysis.

This sequence belongs to the DCK/DGK family. Homodimer.

Its subcellular location is the mitochondrion. The catalysed reaction is thymidine + ATP = dTMP + ADP + H(+). The enzyme catalyses 2'-deoxycytidine + ATP = dCMP + ADP + H(+). It catalyses the reaction 2'-deoxyuridine + ATP = dUMP + ADP + H(+). Phosphorylates thymidine, deoxycytidine, and deoxyuridine in the mitochondrial matrix. In non-replicating cells, where cytosolic dNTP synthesis is down-regulated, mtDNA synthesis depends solely on TK2 and DGUOK. This chain is Thymidine kinase 2, mitochondrial (TK2), found in Macaca fascicularis (Crab-eating macaque).